Here is a 258-residue protein sequence, read N- to C-terminus: UBX domain-containing protein 2A (258 aa).

Positions Met1–Ala152 are required for interaction with CHRNA3. The tract at residues Met1–Ala165 is required for inhibition of CHRNA3 ubiquitination and translocation of CHRNA3 to the plasma membrane resulting in an increase in acetylcholine-gated nicotinic acetylcholine receptor currents. Residues Gln61–Met125 form the SEP domain. Residues Leu168–Leu258 form a required for interaction with VCP region. One can recognise a UBX domain in the interval Asn170–Arg247.

In terms of assembly, part of a complex composed of STUB1/CHIP, VCP/p97, CHRNA3, and UBXN2A that modulates the ubiquitination and endoplasmic reticulum-associated degradation (ERAD) of CHRNA3. Within the complex UBXN2A acts as a scaffold protein required for the interaction of CHRNA3 with VCP/p97, this interaction also inhibits CHRNA3 ubiquitination by STUB1/CHIP and subsequently ERAD. Interacts (via SEP domain) with CHRNA3 and interacts (via UBX domain) with VCP/P97; these interactions are required for the interaction of CHRNA3 with the STUB1-VCP-UBXN2A complex. Interacts with HSPA9/MOT-2 (via SBD domain); the interaction inhibits HSPA9/MOT-2 interaction with and degradation of p53, thereby promotes p53 translocation to the nucleus. Interacts with RICTOR. Post-translationally, ubiquitinated.

The protein resides in the golgi apparatus. Its subcellular location is the endoplasmic reticulum. It is found in the perikaryon. The protein localises to the cell projection. It localises to the dendrite. The protein resides in the nucleus. Its subcellular location is the cytoplasm. Its function is as follows. Acts to repress the ubiquitination and subsequent endoplasmic reticulum-associated degradation of CHRNA3 by the STUB1-VCP-UBXN2A complex in cortical neurons. Also acts to promote the translocation of CHRNA3 to the plasma membrane and subsequently increases plasma membrane acetylcholine-gated ion-channel activation. Plays a role in the inhibition of STUB1-mediated TP53 degradation, via its interaction with HSPA9 which acts to inhibit TP53 binding to HSPA9. Positively mediates the ubiquitination and proteosomal degradation of RICTOR, may thereby act as a negative regulator of the mTORC2 pathway. The polypeptide is UBX domain-containing protein 2A (Rattus norvegicus (Rat)).